A 714-amino-acid polypeptide reads, in one-letter code: Cell wall protein IFF7 (714 aa).

The first 19 residues, 1 to 19 (MLFTLSILSTLLFSTSISA), serve as a signal peptide directing secretion. N-linked (GlcNAc...) asparagine glycosylation occurs at Asn-200. The span at 320-330 (GPVPSQKSLPS) shows a compositional bias: polar residues. Disordered stretches follow at residues 320-633 (GPVP…AADS) and 660-692 (PIAN…ANGS). Low complexity predominate over residues 346 to 504 (GSSSSSSVVS…SSTPLSGDSS (159 aa)). Residues Asn-390, Asn-394, Asn-399, Asn-421, and Asn-473 are each glycosylated (N-linked (GlcNAc...) asparagine). The span at 505–519 (QVSSLTTGTSPDTIA) shows a compositional bias: polar residues. Low complexity predominate over residues 520–544 (SFQTDSTSFGFGSGSPSSGAVQSSG). Residues 545–558 (VTNSTPNTGDVNTQ) show a composition bias toward polar residues. 2 stretches are compositionally biased toward low complexity: residues 559 to 590 (SNTA…TTTG) and 597 to 625 (NNNN…NTNN). 4 N-linked (GlcNAc...) asparagine glycosylation sites follow: Asn-577, Asn-621, Asn-624, and Asn-663. Residues 665–679 (SSSPSSSSSSSSSSS) are compositionally biased toward low complexity. Asn-690 carries an N-linked (GlcNAc...) asparagine glycan. A lipid anchor (GPI-anchor amidated asparagine) is attached at Asn-690. The propeptide at 691 to 714 (GSSKLSIGMTFMISGFATMFALFM) is removed in mature form.

Belongs to the HYR1/IFF family. In terms of processing, the GPI-anchor is attached to the protein in the endoplasmic reticulum and serves to target the protein to the cell surface. There, the glucosamine-inositol phospholipid moiety is cleaved off and the GPI-modified mannoprotein is covalently attached via its lipidless GPI glycan remnant to the 1,6-beta-glucan of the outer cell wall layer.

The protein resides in the secreted. Its subcellular location is the cell wall. It is found in the membrane. Its function is as follows. GPI-anchored cell wall protein involved in cell wall organization, hyphal growth, as well as in host-fungal interaction and virulence. The chain is Cell wall protein IFF7 (IFF8) from Candida albicans (strain SC5314 / ATCC MYA-2876) (Yeast).